A 228-amino-acid polypeptide reads, in one-letter code: MGGTSAAVPSHGLACAPPAAVTLNPRARRRRASSGSGGHRSSPQQPLRSDLLPPATVACRARSQSASSSNVNFGRGDDADKLLEDLLKQHGEVVYSSGGPPDPTVEADDDAECLSFAVSLAKAASEIKATDIRVLCVRRLVYWTRFFIILTAFSNAQIDAISSKMRDIGEKQFSKVASGDTKPNSWTLLDFGDVVVHIFLPQQRAFYNLEEFYGNATPIELPFDTQRQ.

The disordered stretch occupies residues 1–54 (MGGTSAAVPSHGLACAPPAAVTLNPRARRRRASSGSGGHRSSPQQPLRSDLLPP). The N-terminal 62 residues, 1 to 62 (MGGTSAAVPS…PPATVACRAR (62 aa)), are a transit peptide targeting the chloroplast.

The protein belongs to the Iojap/RsfS family. In terms of assembly, interacts with chloroplast ribosomal protein uL14c (rpl14).

The protein localises to the plastid. Its subcellular location is the chloroplast. Its function is as follows. May be a ribosome silencing factor (Potential). Involved in plastid biogenesis. Plastids affected by a mutation in Iojap lose the ability to perform translation and lack plastid ribosomes. In Zea mays (Maize), this protein is Protein Iojap, chloroplastic (Ij).